Here is a 247-residue protein sequence, read N- to C-terminus: OCIA domain-containing protein 1 (247 aa).

The OCIA domain maps to 1–112; the sequence is MNGRADFREP…KKLENSPLGE (112 aa). Phosphoserine is present on residues Ser108 and Ser116. A disordered region spans residues 116-247; sequence SGELRRSLPP…VNKYGDTWDE (132 aa). Composition is skewed to polar residues over residues 136-146 and 168-177; these read SNVSGQSSFGT and ASMNESTPTG. Composition is skewed to basic and acidic residues over residues 192–210 and 218–240; these read DSPKRKSVTYEELRNKNRE and HKTDPSVRPMQERGPQKEVKVNK. Residues Ser193 and Ser198 each carry the phosphoserine modification.

This sequence belongs to the OCIAD1 family. As to quaternary structure, interacts with OCIAD2. Interacts with STAT3.

The protein localises to the endosome. Maintains stem cell potency. Increases STAT3 phosphorylation and controls ERK phosphorylation. May act as a scaffold, increasing STAT3 recruitment onto endosomes. In Rattus norvegicus (Rat), this protein is OCIA domain-containing protein 1.